Here is a 450-residue protein sequence, read N- to C-terminus: 23S rRNA (uracil(1939)-C(5))-methyltransferase RlmD (450 aa).

[4Fe-4S] cluster contacts are provided by cysteine 81, cysteine 87, cysteine 90, and cysteine 173. S-adenosyl-L-methionine is bound by residues glutamine 276, phenylalanine 305, asparagine 310, glutamate 326, aspartate 353, and aspartate 372. Cysteine 402 acts as the Nucleophile in catalysis.

The protein belongs to the class I-like SAM-binding methyltransferase superfamily. RNA M5U methyltransferase family. RlmD subfamily.

The catalysed reaction is uridine(1939) in 23S rRNA + S-adenosyl-L-methionine = 5-methyluridine(1939) in 23S rRNA + S-adenosyl-L-homocysteine + H(+). Its function is as follows. Catalyzes the formation of 5-methyl-uridine at position 1939 (m5U1939) in 23S rRNA. The sequence is that of 23S rRNA (uracil(1939)-C(5))-methyltransferase RlmD from Idiomarina loihiensis (strain ATCC BAA-735 / DSM 15497 / L2-TR).